The sequence spans 447 residues: UDP-glycosyltransferase 76B1 (447 aa).

Residues S269, W327 to A328, H345 to E353, and F367 to Q370 contribute to the UDP-alpha-D-glucose site.

The protein belongs to the UDP-glycosyltransferase family. Expressed in roots, leaves, hydathodes, sepals and style.

In terms of biological role, glycosylates the amino acid-related molecules isoleucic acid (2-hydroxy-3-methylpentanoic acid) and valic acid (2-hydroxy-3-methylbutyric acid). Acts as a negative regulator of salicylic acid (SA)-dependent plant defense in the absence of pathogens and promotes the jasmonate (JA) response. Negatively influences the onset of senescence. This is UDP-glycosyltransferase 76B1 from Arabidopsis thaliana (Mouse-ear cress).